The following is a 173-amino-acid chain: Transcription factor E (173 aa).

The region spanning 3 to 86 is the HTH TFE/IIEalpha-type domain; sequence DDPLVKSLLT…SWKFEEQEVI (84 aa).

The protein belongs to the TFE family. In terms of assembly, monomer. Interaction with RNA polymerase subunits RpoF and RpoE is necessary for Tfe stimulatory transcription activity. Able to interact with Tbp and RNA polymerase in the absence of DNA promoter. Interacts both with the preinitiation and elongation complexes.

Transcription factor that plays a role in the activation of archaeal genes transcribed by RNA polymerase. Facilitates transcription initiation by enhancing TATA-box recognition by TATA-box-binding protein (Tbp), and transcription factor B (Tfb) and RNA polymerase recruitment. Not absolutely required for transcription in vitro, but particularly important in cases where Tbp or Tfb function is not optimal. It dynamically alters the nucleic acid-binding properties of RNA polymerases by stabilizing the initiation complex and destabilizing elongation complexes. Seems to translocate with the RNA polymerase following initiation and acts by binding to the non template strand of the transcription bubble in elongation complexes. This is Transcription factor E from Methanobrevibacter smithii (strain ATCC 35061 / DSM 861 / OCM 144 / PS).